The chain runs to 327 residues: N-acetyl-gamma-glutamyl-phosphate reductase (327 aa).

Cys136 is an active-site residue.

The protein belongs to the NAGSA dehydrogenase family. Type 1 subfamily.

It is found in the cytoplasm. It carries out the reaction N-acetyl-L-glutamate 5-semialdehyde + phosphate + NADP(+) = N-acetyl-L-glutamyl 5-phosphate + NADPH + H(+). It participates in amino-acid biosynthesis; L-arginine biosynthesis; N(2)-acetyl-L-ornithine from L-glutamate: step 3/4. In terms of biological role, catalyzes the NADPH-dependent reduction of N-acetyl-5-glutamyl phosphate to yield N-acetyl-L-glutamate 5-semialdehyde. In Xylella fastidiosa (strain M23), this protein is N-acetyl-gamma-glutamyl-phosphate reductase.